The following is a 422-amino-acid chain: Glycerol-3-phosphate dehydrogenase [NAD(+)] 2 (422 aa).

Residues 69-74, Phe-157, Lys-180, and Ala-213 contribute to the NAD(+) site; that span reads GSGNWG. Substrate is bound at residue Lys-180. The active-site Proton acceptor is the Lys-273. Residues Arg-338 and Gln-367 each coordinate NAD(+). 338–339 is a substrate binding site; that stretch reads RN.

Belongs to the NAD-dependent glycerol-3-phosphate dehydrogenase family.

The enzyme catalyses sn-glycerol 3-phosphate + NAD(+) = dihydroxyacetone phosphate + NADH + H(+). This chain is Glycerol-3-phosphate dehydrogenase [NAD(+)] 2 (GPD2), found in Candida glabrata (strain ATCC 2001 / BCRC 20586 / JCM 3761 / NBRC 0622 / NRRL Y-65 / CBS 138) (Yeast).